A 408-amino-acid polypeptide reads, in one-letter code: CinA-like protein (408 aa).

The protein belongs to the CinA family.

The protein is CinA-like protein of Fervidobacterium nodosum (strain ATCC 35602 / DSM 5306 / Rt17-B1).